Consider the following 96-residue polypeptide: MNIRPLHDRVIVKRSEVESKSAGGIVLTGSAAEQSSRGEVLAVGNGRILENGSVMALDVKVGDIVIFNEGYGVKKEKIDGEEVLILSESDLMAVVG.

Belongs to the GroES chaperonin family. In terms of assembly, heptamer of 7 subunits arranged in a ring. Interacts with the chaperonin GroEL.

Its subcellular location is the cytoplasm. In terms of biological role, together with the chaperonin GroEL, plays an essential role in assisting protein folding. The GroEL-GroES system forms a nano-cage that allows encapsulation of the non-native substrate proteins and provides a physical environment optimized to promote and accelerate protein folding. GroES binds to the apical surface of the GroEL ring, thereby capping the opening of the GroEL channel. The chain is Co-chaperonin GroES from Shewanella piezotolerans (strain WP3 / JCM 13877).